Consider the following 417-residue polypeptide: Serpin H1 (417 aa).

An N-terminal signal peptide occupies residues M1–A17. N6-succinyllysine is present on K93. N-linked (GlcNAc...) asparagine glycans are attached at residues N119 and N124. The residue at position 140 (S140) is a Phosphoserine. K206 carries the post-translational modification N6-acetyllysine. At K295 the chain carries N6-succinyllysine. K318 carries the N6-acetyllysine modification. A glycan (N-linked (GlcNAc...) asparagine) is linked at N394. The Prevents secretion from ER signature appears at R414 to L417.

Belongs to the serpin family.

It localises to the endoplasmic reticulum lumen. Its function is as follows. Binds specifically to collagen. Could be involved as a chaperone in the biosynthetic pathway of collagen. The sequence is that of Serpin H1 (Serpinh1) from Rattus norvegicus (Rat).